Here is a 496-residue protein sequence, read N- to C-terminus: Probable G-protein coupled receptor K01A12.3 (496 aa).

Residues 1-19 (MESVTRHRADMISFFTFDS) are Extracellular-facing. The helical transmembrane segment at 20 to 40 (YISIVGVAYTAVGLLGVFCNV) threads the bilayer. At 41–58 (TTVIMILTNRVFRLSAYT) the chain is on the cytoplasmic side. The helical transmembrane segment at 59 to 79 (IMANVALADSIVMLIAGVACG) threads the bilayer. Residues 80-128 (MDVMWPNPNDLTSFIPSLEEPYQKIAPVSLRNDSKTDSSAAGFETGNIH) are Extracellular-facing. The N-linked (GlcNAc...) asparagine glycan is linked to Asn-111. A helical membrane pass occupies residues 129–149 (AVLSFSFVAAWTAGVISYAML). Residues 150-169 (GTNRCIAICYYGTKARALNQ) lie on the Cytoplasmic side of the membrane. Residues 170 to 190 (VSVAVACSASTWIVGIAAALV) traverse the membrane as a helical segment. Residues 191–216 (GTLSQPMIGIQRTMWSISFLEPRPHT) lie on the Extracellular side of the membrane. A helical membrane pass occupies residues 217–237 (TLFFTLLCAANLLGLGAQWVC). Residues 238–285 (STLVLLKIRQVKKKISKNKLNQNSANRFRKQVILALNEIIVTGNFKAR) are Cytoplasmic-facing. A helical transmembrane segment spans residues 286–306 (LTFQFFYPSILCTISTFLFFI). Topologically, residues 307–318 (KPYAFEYLSGWQ) are extracellular. The chain crosses the membrane as a helical span at residues 319–339 (LVILHLLWLCNHTCNPFIYAY). At 340–496 (FNDRMRLTYK…WVKFAKKASI (157 aa)) the chain is on the cytoplasmic side. The tract at residues 451 to 470 (TKELESAHNQGGSSRFDSER) is disordered.

Belongs to the G-protein coupled receptor 1 family.

The protein resides in the cell membrane. The protein is Probable G-protein coupled receptor K01A12.3 of Caenorhabditis elegans.